Consider the following 293-residue polypeptide: ATP synthase subunit gamma, mitochondrial (293 aa).

Residues 1 to 21 constitute a mitochondrion transit peptide; it reads MFALRTAARPAARSVGATRNY.

F-type ATP synthases have 2 components, the catalytic core F(1) and the membrane-embedded component F(0), linked together by a central stalk and a peripheral stalk. The central stalk, also called rotor shaft, is often seen as part of F(1). The peripheral stalk is seen as part of F(0). F(0) contains the membrane channel next to the rotor. F-type ATP synthases form dimers but each monomer functions independently in ATP generation. The dimer consists of 17 different polypeptides: ATP1 (subunit alpha, 3 molecules per monomer, part of F(1)), ATP2 (subunit beta, 3 copies per monomer, part of F(1)), ATP3 (subunit gamma, part of the central stalk), ATP4 (subunit b, part of the peripheral stalk), ATP5/OSCP (subunit 5/OSCP, part of the peripheral stalk), ATP6 (subunit a, part of the peripheral stalk), ATP7 (subunit d, part of the peripheral stalk), ATP8 (subunit 8, part of the peripheral stalk), OLI1 (subunit c, part of the rotor, 10 molecules per monomer), ATP14 (subunit h, part of the peripheral stalk), ATP15 (subunit epsilon, part of the central stalk), ATP16 (subunit delta, part of the central stalk), ATP17 (subunit f, part of the peripheral stalk), ATP18 (subunit i/j, part of the peripheral stalk), ATP19 (subunit k, dimer-specific, at interface between monomers), ATP20 (subunit g, at interface between monomers), TIM11 (subunit e, at interface between monomers).

The protein resides in the mitochondrion inner membrane. Mitochondrial membrane ATP synthase (F(1)F(0) ATP synthase or Complex V) produces ATP from ADP in the presence of a proton gradient across the membrane which is generated by electron transport complexes of the respiratory chain. F-type ATP synthases consist of two structural domains, F(1) - containing the extramembraneous catalytic core, and F(0) - containing the membrane proton channel, linked together by a central stalk and a peripheral stalk. During catalysis, ATP synthesis in the catalytic domain of F(1) is coupled via a rotary mechanism of the central stalk subunits to proton translocation. Part of the complex F(1) domain and the central stalk which is part of the complex rotary element. The gamma/ATP3 subunit protrudes into the catalytic domain formed of alpha/ATP1(3)beta/ATP2(3). Rotation of the central stalk against the surrounding alpha/ATP1(3)beta/ATP2(3) subunits leads to hydrolysis of ATP in three separate catalytic sites on the beta/ATP2 subunits. This is ATP synthase subunit gamma, mitochondrial from Yarrowia lipolytica (strain CLIB 122 / E 150) (Yeast).